We begin with the raw amino-acid sequence, 263 residues long: NADH dehydrogenase [ubiquinone] iron-sulfur protein 3, mitochondrial (263 aa).

Residues 1–35 (MVAAVARLWWRGLLGASALTRGAGRPSVLLLPVRR) constitute a mitochondrion transit peptide.

It belongs to the complex I 30 kDa subunit family. As to quaternary structure, core subunit of respiratory chain NADH dehydrogenase (Complex I) which is composed of 45 different subunits. Interacts with NDUFAF3. Interacts with RAB5IF. Found in subcomplexes containing subunits NDUFS2, MT-ND1 and NDUFA13.

The protein resides in the mitochondrion inner membrane. It catalyses the reaction a ubiquinone + NADH + 5 H(+)(in) = a ubiquinol + NAD(+) + 4 H(+)(out). Its function is as follows. Core subunit of the mitochondrial membrane respiratory chain NADH dehydrogenase (Complex I) which catalyzes electron transfer from NADH through the respiratory chain, using ubiquinone as an electron acceptor. Essential for the catalytic activity and assembly of complex I. The chain is NADH dehydrogenase [ubiquinone] iron-sulfur protein 3, mitochondrial (NDUFS3) from Pongo pygmaeus (Bornean orangutan).